The chain runs to 1365 residues: Glucosyltransferase-S (1365 aa).

The or 37 signal peptide spans 1–36 (MEKNLRYKLHKVKKQWVAIGVTTVTLSFLAGGQVVA). Composition is skewed to polar residues over residues 80-89 (DQTATSQVSP) and 127-146 (RQSA…TSDQ). Disordered stretches follow at residues 80–99 (DQTA…DNQV) and 127–152 (RQSA…HLET). Cell wall-binding repeat units follow at residues 146 to 166 (QPGH…NGQR) and 168 to 187 (KNYS…QTGE). Residues 200 to 1000 (QDNVPDSYQA…KPIDPSVKIT (801 aa)) are catalytic; approximate. Cell wall-binding repeat units follow at residues 1052–1071 (ANGF…NGQE), 1073–1092 (KNRF…DGKM), 1093–1112 (ATGK…NGKQ), 1113–1133 (LKEG…NGRT), 1136–1159 (NKGF…DGTI), 1160–1179 (AIGL…YGYQ), 1234–1253 (LTGE…NGVQ), 1278–1298 (GKGW…SGQV), 1299–1318 (LTGL…KGIQ), and 1343–1362 (RDRW…NGLA).

It belongs to the glycosyl hydrolase 70 family.

The catalysed reaction is [(1-&gt;6)-alpha-D-glucosyl](n) + sucrose = [(1-&gt;6)-alpha-D-glucosyl](n+1) + D-fructose. Glucan synthesis by GTF-S is independent of primer glucan unlike GTF-I. Its function is as follows. Production of extracellular glucans, that are thought to play a key role in the development of the dental plaque because of their ability to adhere to smooth surfaces and mediate the aggregation of bacterial cells and food debris. This Streptococcus downei (Streptococcus sobrinus) protein is Glucosyltransferase-S (gtfS).